Consider the following 334-residue polypeptide: Ornithine carbamoyltransferase (334 aa).

Carbamoyl phosphate is bound by residues S56–T59, Q83, R107, and H134–Q137. Residues N168, D232, and S236–M237 contribute to the L-ornithine site. Carbamoyl phosphate-binding positions include C274–L275 and R320.

This sequence belongs to the aspartate/ornithine carbamoyltransferase superfamily. OTCase family.

The protein resides in the cytoplasm. The catalysed reaction is carbamoyl phosphate + L-ornithine = L-citrulline + phosphate + H(+). It functions in the pathway amino-acid biosynthesis; L-arginine biosynthesis; L-arginine from L-ornithine and carbamoyl phosphate: step 1/3. Reversibly catalyzes the transfer of the carbamoyl group from carbamoyl phosphate (CP) to the N(epsilon) atom of ornithine (ORN) to produce L-citrulline. This chain is Ornithine carbamoyltransferase, found in Shigella boydii serotype 4 (strain Sb227).